Consider the following 368-residue polypeptide: 4-hydroxy-3-methylbut-2-en-1-yl diphosphate synthase (flavodoxin) (368 aa).

Positions 271, 274, 306, and 313 each coordinate [4Fe-4S] cluster.

This sequence belongs to the IspG family. Requires [4Fe-4S] cluster as cofactor.

It catalyses the reaction (2E)-4-hydroxy-3-methylbut-2-enyl diphosphate + oxidized [flavodoxin] + H2O + 2 H(+) = 2-C-methyl-D-erythritol 2,4-cyclic diphosphate + reduced [flavodoxin]. It participates in isoprenoid biosynthesis; isopentenyl diphosphate biosynthesis via DXP pathway; isopentenyl diphosphate from 1-deoxy-D-xylulose 5-phosphate: step 5/6. Its function is as follows. Converts 2C-methyl-D-erythritol 2,4-cyclodiphosphate (ME-2,4cPP) into 1-hydroxy-2-methyl-2-(E)-butenyl 4-diphosphate. The sequence is that of 4-hydroxy-3-methylbut-2-en-1-yl diphosphate synthase (flavodoxin) from Haemophilus influenzae (strain PittGG).